A 236-amino-acid chain; its full sequence is Uridylate kinase (236 aa).

Lys-10–Gly-13 is an ATP binding site. Gly-52 contacts UMP. The ATP site is built by Gly-53 and Arg-57. UMP contacts are provided by residues Asp-72 and Thr-133–Thr-140. Thr-160, Tyr-166, and Asp-169 together coordinate ATP.

Belongs to the UMP kinase family. In terms of assembly, homohexamer.

It localises to the cytoplasm. It carries out the reaction UMP + ATP = UDP + ADP. It functions in the pathway pyrimidine metabolism; CTP biosynthesis via de novo pathway; UDP from UMP (UMPK route): step 1/1. Inhibited by UTP. Its function is as follows. Catalyzes the reversible phosphorylation of UMP to UDP. The chain is Uridylate kinase from Cupriavidus metallidurans (strain ATCC 43123 / DSM 2839 / NBRC 102507 / CH34) (Ralstonia metallidurans).